Reading from the N-terminus, the 382-residue chain is UDP-4-amino-4-deoxy-L-arabinose--oxoglutarate aminotransferase (382 aa).

Lysine 183 bears the N6-(pyridoxal phosphate)lysine mark.

The protein belongs to the DegT/DnrJ/EryC1 family. ArnB subfamily. As to quaternary structure, homodimer. Requires pyridoxal 5'-phosphate as cofactor.

It catalyses the reaction UDP-4-amino-4-deoxy-beta-L-arabinose + 2-oxoglutarate = UDP-beta-L-threo-pentopyranos-4-ulose + L-glutamate. It participates in nucleotide-sugar biosynthesis; UDP-4-deoxy-4-formamido-beta-L-arabinose biosynthesis; UDP-4-deoxy-4-formamido-beta-L-arabinose from UDP-alpha-D-glucuronate: step 2/3. Its pathway is bacterial outer membrane biogenesis; lipopolysaccharide biosynthesis. Catalyzes the conversion of UDP-4-keto-arabinose (UDP-Ara4O) to UDP-4-amino-4-deoxy-L-arabinose (UDP-L-Ara4N). The modified arabinose is attached to lipid A and is required for resistance to polymyxin and cationic antimicrobial peptides. The polypeptide is UDP-4-amino-4-deoxy-L-arabinose--oxoglutarate aminotransferase (Pseudomonas aeruginosa (strain ATCC 15692 / DSM 22644 / CIP 104116 / JCM 14847 / LMG 12228 / 1C / PRS 101 / PAO1)).